A 315-amino-acid chain; its full sequence is MHRALLCPFPATTPHPQAAQLANDCLEWTRKCGLLPDESPRTLDKVRSYSALAAHCYPDAHFERLRAICDYYSWLFFFDDVCENTSLNGAEPKVVSSLLFDVYGVLRGPTAAVGHAPFAQALADIWRRIGDGCPGFWRRRLIRHVENYIDGCVWEAQNRQLDRVPSRAVFEGMRMHTSTMYEFWDFIEYAGDLFLPDEVVEHPLVAEVRRAGNAIASFANDIYSLRKETSNRDVHNLVVVLMHEERIELEAAYARAAGIHDAQVEHFLDLVKHLPTFSATIDRNLARYVEGIRIWIRANHDWSIVTPRYNEPDAR.

Residues Asp-79, Asn-220, Ser-224, and Glu-228 each coordinate Mg(2+). Residues 79 to 83 (DDVCE) carry the DDXXD motif motif. An NXXXSXXXE motif motif is present at residues 220-228 (NDIYSLRKE).

This sequence belongs to the terpene synthase family. Mg(2+) is required as a cofactor.

The catalysed reaction is (2E,6E)-farnesyl diphosphate + H2O = 10-epi-cubebol + diphosphate. In terms of biological role, catalyzes the cyclization of farnesyl diphosphate (FPP) to 10-epi-cubebol. Is also responsible for the formation of many other sesquiterpenes, mainly cadalanes and cubebanes, including 1,10-di-epi-cubebol and the cadalanes delta-cadinene, T-cadinol and alpha-cadinol. The chain is 10-epi-cubebol synthase from Sorangium cellulosum (strain So ce56) (Polyangium cellulosum (strain So ce56)).